Consider the following 377-residue polypeptide: RCC1 domain-containing protein 1 (377 aa).

The interval 1–172 (MAEKRHGAWF…VRQLELGAEH (172 aa)) is interaction with KDM8. One copy of the RCC1 1 repeat lies at 6–57 (HGAWFGFGFCGFGQALGSGNSHHSVYSPEPLHASDDICQVSAGWSYTALVTR). Position 144 is a (3R)-3-hydroxyarginine (Arg144). RCC1 repeat units lie at residues 179–230 (AGQV…CLSE), 232–289 (GDIY…IAIQ), and 319–372 (TGEL…VYAM).

Found in a complex with KDM8. Interacts (via N-terminus) with KDM8 (via N-terminus). Post-translationally, specifically hydroxylated (with R stereochemistry) at C-3 of ARG-141 by KDM8.

The protein localises to the chromosome. Functionally, plays a role in transcriptional repression of satellite repeats, possibly by regulating H3K36 methylation levels in centromeric regions together with KDM8. Possibly together with KDM8, is involved in proper mitotic spindle organization and chromosome segregation. Plays a role in regulating alpha-tubulin deacetylation and cytoskeletal microtubule stability, thereby promoting cell migration and TGF-beta-induced epithelial to mesenchymal transition (EMT), potentially through the inhibition of KDM8. The sequence is that of RCC1 domain-containing protein 1 (Rccd1) from Mus musculus (Mouse).